We begin with the raw amino-acid sequence, 238 residues long: Ribitol-5-phosphate cytidylyltransferase 2 (238 aa).

CTP contacts are provided by residues 7 to 10 and 81 to 87; these read LAGG and GTDRNET.

This sequence belongs to the IspD/TarI cytidylyltransferase family. TarI subfamily.

The enzyme catalyses D-ribitol 5-phosphate + CTP + H(+) = CDP-L-ribitol + diphosphate. The protein operates within cell wall biogenesis; poly(ribitol phosphate) teichoic acid biosynthesis. Catalyzes the transfer of the cytidylyl group of CTP to D-ribitol 5-phosphate. This is Ribitol-5-phosphate cytidylyltransferase 2 from Staphylococcus aureus (strain MSSA476).